Consider the following 220-residue polypeptide: FMN-dependent NADH:quinone oxidoreductase 1 (220 aa).

Residue 18-20 participates in FMN binding; that stretch reads SVS.

This sequence belongs to the azoreductase type 1 family. In terms of assembly, homodimer. FMN is required as a cofactor.

It catalyses the reaction 2 a quinone + NADH + H(+) = 2 a 1,4-benzosemiquinone + NAD(+). It carries out the reaction N,N-dimethyl-1,4-phenylenediamine + anthranilate + 2 NAD(+) = 2-(4-dimethylaminophenyl)diazenylbenzoate + 2 NADH + 2 H(+). Quinone reductase that provides resistance to thiol-specific stress caused by electrophilic quinones. In terms of biological role, also exhibits azoreductase activity. Catalyzes the reductive cleavage of the azo bond in aromatic azo compounds to the corresponding amines. The protein is FMN-dependent NADH:quinone oxidoreductase 1 of Bacillus anthracis.